Consider the following 622-residue polypeptide: Galactolipid galactosyltransferase SFR2, chloroplastic (622 aa).

Residues 1-3 lie on the Stromal side of the membrane; it reads MEL. The chain crosses the membrane as a helical; Signal-anchor span at residues 4-24; the sequence is FALLIKVAGLLATVTVGANVV. Over 25-622 the chain is Cytoplasmic; sequence SYSRFRRQNL…LHPALASPFD (598 aa). Residues His222, 266 to 267, Tyr377, Glu429, Trp467, 474 to 475, and Phe483 contribute to the a beta-D-glucoside site; these read NE and EW. Glu267 acts as the Proton donor in catalysis. The active-site Nucleophile is Glu429.

This sequence belongs to the glycosyl hydrolase 1 family. In terms of tissue distribution, expressed in hypocotyls, cotyledons, stems, leaves, pedicels, sepals, anthers and pistils. Limited expression in roots. Not detected in petals or filaments.

Its subcellular location is the plastid. The protein resides in the chloroplast. It localises to the chloroplast outer membrane. It carries out the reaction 2 a 1,2-diacyl-3-O-(beta-D-galactosyl)-sn-glycerol = a 1,2-diacyl-3-O-[beta-D-galactosyl-(1-&gt;6)-beta-D-galactosyl]-sn-glycerol + a 1,2-diacyl-sn-glycerol. Induced by MgCl(2). Its function is as follows. Glycosyl hydrolase family protein acting primarily as a highly specific galactosyltransferase. Synthesizes digalactosyldiacylglycerol from monogalactosyldiacylglycerol in the absence of UDP-galactose in vitro. Hydrolyzes o- and p-nitrophenyl beta-D-glucoside in vitro. Plays a role in freezing tolerance. May play a role in chloroplast protection. This chain is Galactolipid galactosyltransferase SFR2, chloroplastic, found in Arabidopsis thaliana (Mouse-ear cress).